The primary structure comprises 1059 residues: Kinesin-like protein KIN-7K, chloroplastic (1059 aa).

2 stretches are compositionally biased toward low complexity: residues 1–35 (MSSR…SAGS) and 43–58 (PRSY…SSHF). The N-terminal 48 residues, 1 to 48 (MSSRPSSSASSRRSSSPFSAGSRRPPTSSSSSAGSYLTGRLMPRSYST), are a transit peptide targeting the chloroplast. Residues 1-99 (MSSRPSSSAS…SPPSPVPFPS (99 aa)) form a disordered region. Positions 59–69 (FGGGGGSGGGS) are enriched in gly residues. Positions 70-87 (RSTTPGRRGSSSSSLVGP) are enriched in low complexity. Residues 88–97 (VPSPPSPVPF) are compositionally biased toward pro residues. The Kinesin motor domain maps to 114–431 (SISVTIRFRP…LKFASRAKRV (318 aa)). 194–201 (GVTSSGKT) contributes to the ATP binding site. Positions 435-518 (AARNRMIDEK…IQRLTKLILV (84 aa)) form a coiled coil. Residues 526 to 570 (ALTDTSSHQRHNSVNEEDKVSTSQDSSMLVQNDSATKDSLSSASP) form a disordered region. A compositionally biased stretch (polar residues) spans 546–569 (STSQDSSMLVQNDSATKDSLSSAS). Coiled-coil stretches lie at residues 640–674 (EGTK…GEAS), 700–781 (ELEL…EENR), and 862–910 (LEDM…LEND). The segment at 1013–1048 (CKVCFESATAAVLLPCRHFCLCKPCSLACSECPLCR) adopts an RING-type zinc-finger fold.

Belongs to the TRAFAC class myosin-kinesin ATPase superfamily. Kinesin family. KIN-7 subfamily.

It localises to the plastid. The protein resides in the chloroplast. In Oryza sativa subsp. japonica (Rice), this protein is Kinesin-like protein KIN-7K, chloroplastic.